The sequence spans 325 residues: Hydroxymethylglutaryl-CoA lyase, mitochondrial (325 aa).

Residues 1–27 constitute a mitochondrion transit peptide; sequence MAAMTKALPRRLVGLASLRAVSTSSMD. One can recognise a Pyruvate carboxyltransferase domain in the interval 33–300; sequence VKIVEVGPRD…HTGVNLQKLL (268 aa). R41 lines the substrate pocket. Position 42 (D42) interacts with a divalent metal cation. K48 is modified (N6-acetyllysine; alternate). Position 48 is an N6-succinyllysine; alternate (K48). An N6-acetyllysine modification is found at K111. 2 positions are modified to N6-acetyllysine; alternate: K137 and K179. N6-succinyllysine; alternate is present on residues K137 and K179. H233 and H235 together coordinate a divalent metal cation. C266 is an active-site residue. N275 contributes to the a divalent metal cation binding site. The short motif at 323–325 is the Microbody targeting signal element; it reads CKL. K324 carries the N6-acetyllysine modification.

This sequence belongs to the HMG-CoA lyase family. Homodimer; disulfide-linked. Can also form homotetramers.

It is found in the mitochondrion matrix. Its subcellular location is the peroxisome. The catalysed reaction is (3S)-3-hydroxy-3-methylglutaryl-CoA = acetoacetate + acetyl-CoA. Its pathway is metabolic intermediate metabolism; (S)-3-hydroxy-3-methylglutaryl-CoA degradation; acetoacetate from (S)-3-hydroxy-3-methylglutaryl-CoA: step 1/1. Mitochondrial 3-hydroxy-3-methylglutaryl-CoA lyase that catalyzes a cation-dependent cleavage of (S)-3-hydroxy-3-methylglutaryl-CoA into acetyl-CoA and acetoacetate, a key step in ketogenesis. Terminal step in leucine catabolism. Ketone bodies (beta-hydroxybutyrate, acetoacetate and acetone) are essential as an alternative source of energy to glucose, as lipid precursors and as regulators of metabolism. The chain is Hydroxymethylglutaryl-CoA lyase, mitochondrial (HMGCL) from Macaca fascicularis (Crab-eating macaque).